A 436-amino-acid chain; its full sequence is Prenyltransferase nscD (436 aa).

This sequence belongs to the tryptophan dimethylallyltransferase family.

It functions in the pathway secondary metabolite biosynthesis. Prenyltransferase; part of the gene cluster that mediates the biosynthesis of neosartoricin B, a prenylated anthracenone that probably exhibits T-cell antiproliferative activity, suggestive of a physiological role as an immunosuppressive agent. The non-reducing polyketide synthase nscA probably synthesizes and cyclizes the decaketide backbone. The hydrolase nscB then mediates the product release through hydrolysis followed by spontaneous decarboxylation. The prenyltransferase nscD catalyzes the addition of the dimethylallyl group to the aromatic C5. The FAD-dependent monooxygenase nscC is then responsible for the stereospecific hydroxylation at C2. Neosartoricin B can be converted into two additional compounds neosartoricins C and D. Neosartoricin C is a spirocyclic compound that is cyclized through the attack of C3 hydroxyl on C14, followed by dehydration. On the other hand, neosartoricin D is a further cyclized compound in which attack of C2 on C14 in neosartoricin C results in the formation of the acetal-containing dioxabicyclo-octanone ring. Both of these compounds are novel and possibly represent related metabolites of the gene cluster. The polypeptide is Prenyltransferase nscD (Trichophyton rubrum (strain ATCC MYA-4607 / CBS 118892) (Athlete's foot fungus)).